The chain runs to 427 residues: Septin-8-A (427 aa).

A Septin-type G domain is found at 39–305 (QGFCFNILCV…ELYRRCKLEE (267 aa)). Positions 49–56 (GETGIGKS) are G1 motif. Residues 49–56 (GETGIGKS), Gly104, 185–193 (KADTISKSE), Gly239, and Arg254 each bind GTP. A G3 motif region spans residues 101–104 (DTVG). Residues 184–187 (AKAD) are G4 motif. Residues 320–409 (LQETYEAKRK…KAAMEALQSQ (90 aa)) are a coiled coil. The segment covering 376 to 389 (QEESKKVEDKRRDL) has biased composition (basic and acidic residues). The disordered stretch occupies residues 376 to 427 (QEESKKVEDKRRDLEEEMNSFNRRKAAMEALQSQSFQATSQQPLKKDKDRKN). Positions 406–418 (LQSQSFQATSQQP) are enriched in polar residues.

This sequence belongs to the TRAFAC class TrmE-Era-EngA-EngB-Septin-like GTPase superfamily. Septin GTPase family.

This is Septin-8-A (sept8-a) from Xenopus laevis (African clawed frog).